A 379-amino-acid chain; its full sequence is Cobalt-precorrin-5B C(1)-methyltransferase (379 aa).

This sequence belongs to the CbiD family.

The catalysed reaction is Co-precorrin-5B + S-adenosyl-L-methionine = Co-precorrin-6A + S-adenosyl-L-homocysteine. It functions in the pathway cofactor biosynthesis; adenosylcobalamin biosynthesis; cob(II)yrinate a,c-diamide from sirohydrochlorin (anaerobic route): step 6/10. Catalyzes the methylation of C-1 in cobalt-precorrin-5B to form cobalt-precorrin-6A. The chain is Cobalt-precorrin-5B C(1)-methyltransferase from Salmonella paratyphi B (strain ATCC BAA-1250 / SPB7).